Reading from the N-terminus, the 1357-residue chain is DNA-directed RNA polymerase subunit beta (1357 aa).

The protein belongs to the RNA polymerase beta chain family. The RNAP catalytic core consists of 2 alpha, 1 beta, 1 beta' and 1 omega subunit. When a sigma factor is associated with the core the holoenzyme is formed, which can initiate transcription.

It catalyses the reaction RNA(n) + a ribonucleoside 5'-triphosphate = RNA(n+1) + diphosphate. Its function is as follows. DNA-dependent RNA polymerase catalyzes the transcription of DNA into RNA using the four ribonucleoside triphosphates as substrates. This is DNA-directed RNA polymerase subunit beta from Ectopseudomonas mendocina (strain ymp) (Pseudomonas mendocina).